Reading from the N-terminus, the 1173-residue chain is Alpha-mannosidase 2 (1173 aa).

A disordered region spans residues 1 to 21; it reads MPFSSYIGNSRRSSTGGGTGG. At 1–50 the chain is on the cytoplasmic side; the sequence is MPFSSYIGNSRRSSTGGGTGGWGQSLLPTALSKSKLAINRKPRKRTLVVN. Residues 51 to 71 traverse the membrane as a helical; Signal-anchor segment; that stretch reads FIFANFFVIALTVSLLFFLLT. The Lumenal segment spans residues 72–1173; it reads LFHFGVPGPI…AYKLELRPHK (1102 aa). Asparagine 106 carries N-linked (GlcNAc...) asparagine glycosylation. Zn(2+)-binding residues include histidine 162 and aspartate 164. Residue asparagine 262 is glycosylated (N-linked (GlcNAc...) asparagine). Aspartate 276 contributes to the Zn(2+) binding site. The active-site Nucleophile is the aspartate 276. An N-linked (GlcNAc...) asparagine glycan is attached at asparagine 467. Residue histidine 564 participates in Zn(2+) binding. 6 N-linked (GlcNAc...) asparagine glycosylation sites follow: asparagine 675, asparagine 772, asparagine 782, asparagine 991, asparagine 1098, and asparagine 1108.

This sequence belongs to the glycosyl hydrolase 38 family. In terms of assembly, homodimer; disulfide-linked. Interacts with GALT1. Requires Zn(2+) as cofactor. Post-translationally, glycosylated.

It localises to the golgi apparatus membrane. The catalysed reaction is N(4)-{beta-D-GlcNAc-(1-&gt;2)-alpha-D-Man-(1-&gt;3)-[alpha-D-Man-(1-&gt;3)-[alpha-D-Man-(1-&gt;6)]-alpha-D-Man-(1-&gt;6)]-beta-D-Man-(1-&gt;4)-beta-D-GlcNAc-(1-&gt;4)-beta-D-GlcNAc}-L-asparaginyl-[protein] + 2 H2O = 2 alpha-D-mannopyranose + an N(4)-{beta-D-GlcNAc-(1-&gt;2)-alpha-D-Man-(1-&gt;3)-[alpha-D-Man-(1-&gt;6)]-beta-D-Man-(1-&gt;4)-beta-D-GlcNAc-(1-&gt;4)-beta-D-GlcNAc}-L-asparaginyl-[protein]. It functions in the pathway protein modification; protein glycosylation. Its activity is regulated as follows. Inhibited by 1 mM Cu(2+) and by the class II alpha-mannosidase inhibitor swainsonine. In terms of biological role, catalyzes the first committed step in the biosynthesis of complex N-glycans. It controls conversion of high mannose to complex N-glycans; the final hydrolytic step in the N-glycan maturation pathway. Converts GlcNAcMan(5)GlcNAc(2) (Man5Gn) into GlcNAcMan(3)GlcNAc(2) (MGn) by sequential removal of two alpha1,6- and alpha1,3-linked mannose residues from the alpha1,6-mannose branch of the substrate. To a lesser extent, also able to cleave beta1,2-xylosylated Man5Gn-glycopeptide (Man5GnX-GP) and pyridylaminated substrates Man5Gn-PA and Man5GnX-PA, but not active toward Man5-glycopeptide. Required for resistance to salt stress. This is Alpha-mannosidase 2 from Arabidopsis thaliana (Mouse-ear cress).